Consider the following 196-residue polypeptide: Early light-induced protein, chloroplastic (196 aa).

The transit peptide at 1-48 (MAVSSCQSIMSNSMTNISSRSRVNQFTNIPSVYIPTLRRNVSLKVRSM) directs the protein to the chloroplast. The span at 47-57 (SMAEGEPKEQS) shows a compositional bias: basic and acidic residues. A disordered region spans residues 47–81 (SMAEGEPKEQSKVAVDPTTPTASTPTPQPAYTRPP). The next 3 membrane-spanning stretches (helical) occupy residues 105 to 125 (LAMIGFVAAMGVEIAKGQGLS), 132 to 152 (GVAWFLGTSVLLSLASLIPFF), and 176 to 196 (IAMLGLVALAFTEFVKGTSLV).

Belongs to the ELIP/psbS family.

Its subcellular location is the plastid. It is found in the chloroplast membrane. Functionally, probably involved in the integration of pigments into the mature pigment-protein complexes. This is Early light-induced protein, chloroplastic from Pisum sativum (Garden pea).